Reading from the N-terminus, the 76-residue chain is Putative defensin-like protein 62 (76 aa).

Residues 1-26 form the signal peptide; sequence MDVTKTYVTIFVVAILTISVLIQIQQ. Intrachain disulfides connect C30–C71, C34–C57, C43–C69, and C47–C70.

This sequence belongs to the DEFL family.

The protein resides in the secreted. The protein is Putative defensin-like protein 62 of Arabidopsis thaliana (Mouse-ear cress).